A 168-amino-acid chain; its full sequence is Ribosome-binding factor A (168 aa).

A compositionally biased stretch (basic and acidic residues) spans 125-138 (RVREGAKHAGDSDP). The interval 125-168 (RVREGAKHAGDSDPYRVLGEGDLEGPATGGPDVEDEGGANSHDR) is disordered.

It belongs to the RbfA family. As to quaternary structure, monomer. Binds 30S ribosomal subunits, but not 50S ribosomal subunits or 70S ribosomes.

It is found in the cytoplasm. One of several proteins that assist in the late maturation steps of the functional core of the 30S ribosomal subunit. Associates with free 30S ribosomal subunits (but not with 30S subunits that are part of 70S ribosomes or polysomes). Required for efficient processing of 16S rRNA. May interact with the 5'-terminal helix region of 16S rRNA. This is Ribosome-binding factor A from Mycolicibacterium gilvum (strain PYR-GCK) (Mycobacterium gilvum (strain PYR-GCK)).